A 274-amino-acid chain; its full sequence is Large ribosomal subunit protein uL2 (274 aa).

2 disordered regions span residues 28 to 53 (KPYA…TVRH) and 223 to 274 (VAMN…RRTK). A compositionally biased stretch (low complexity) spans 39-48 (KSGGRNNNGR). Over residues 254–274 (KGAKTRKNKRTDKFIVRRRTK) the composition is skewed to basic residues.

The protein belongs to the universal ribosomal protein uL2 family. As to quaternary structure, part of the 50S ribosomal subunit. Forms a bridge to the 30S subunit in the 70S ribosome.

Functionally, one of the primary rRNA binding proteins. Required for association of the 30S and 50S subunits to form the 70S ribosome, for tRNA binding and peptide bond formation. It has been suggested to have peptidyltransferase activity; this is somewhat controversial. Makes several contacts with the 16S rRNA in the 70S ribosome. The protein is Large ribosomal subunit protein uL2 of Pseudoalteromonas translucida (strain TAC 125).